The sequence spans 327 residues: Methionyl-tRNA formyltransferase (327 aa).

A (6S)-5,6,7,8-tetrahydrofolate-binding site is contributed by 121 to 124; sequence SLLP.

Belongs to the Fmt family.

It catalyses the reaction L-methionyl-tRNA(fMet) + (6R)-10-formyltetrahydrofolate = N-formyl-L-methionyl-tRNA(fMet) + (6S)-5,6,7,8-tetrahydrofolate + H(+). Attaches a formyl group to the free amino group of methionyl-tRNA(fMet). The formyl group appears to play a dual role in the initiator identity of N-formylmethionyl-tRNA by promoting its recognition by IF2 and preventing the misappropriation of this tRNA by the elongation apparatus. This chain is Methionyl-tRNA formyltransferase, found in Burkholderia pseudomallei (strain K96243).